A 430-amino-acid chain; its full sequence is tRNA(Ile)-lysidine synthase (430 aa).

27–32 (SGGSDS) provides a ligand contact to ATP.

It belongs to the tRNA(Ile)-lysidine synthase family.

Its subcellular location is the cytoplasm. The catalysed reaction is cytidine(34) in tRNA(Ile2) + L-lysine + ATP = lysidine(34) in tRNA(Ile2) + AMP + diphosphate + H(+). Its function is as follows. Ligates lysine onto the cytidine present at position 34 of the AUA codon-specific tRNA(Ile) that contains the anticodon CAU, in an ATP-dependent manner. Cytidine is converted to lysidine, thus changing the amino acid specificity of the tRNA from methionine to isoleucine. This chain is tRNA(Ile)-lysidine synthase, found in Rickettsia typhi (strain ATCC VR-144 / Wilmington).